A 108-amino-acid chain; its full sequence is ATP-dependent Clp protease adapter protein ClpS (108 aa).

It belongs to the ClpS family. In terms of assembly, binds to the N-terminal domain of the chaperone ClpA.

Involved in the modulation of the specificity of the ClpAP-mediated ATP-dependent protein degradation. In Cupriavidus metallidurans (strain ATCC 43123 / DSM 2839 / NBRC 102507 / CH34) (Ralstonia metallidurans), this protein is ATP-dependent Clp protease adapter protein ClpS.